A 208-amino-acid polypeptide reads, in one-letter code: Uracil phosphoribosyltransferase (208 aa).

5-phospho-alpha-D-ribose 1-diphosphate contacts are provided by residues R78, R103, and 130–138 (DPMLATGGS). Uracil contacts are provided by residues I193 and 198–200 (GDA). 5-phospho-alpha-D-ribose 1-diphosphate is bound at residue D199.

Belongs to the UPRTase family. Mg(2+) is required as a cofactor.

It catalyses the reaction UMP + diphosphate = 5-phospho-alpha-D-ribose 1-diphosphate + uracil. It functions in the pathway pyrimidine metabolism; UMP biosynthesis via salvage pathway; UMP from uracil: step 1/1. Allosterically activated by GTP. Its function is as follows. Catalyzes the conversion of uracil and 5-phospho-alpha-D-ribose 1-diphosphate (PRPP) to UMP and diphosphate. In Roseiflexus sp. (strain RS-1), this protein is Uracil phosphoribosyltransferase.